We begin with the raw amino-acid sequence, 90 residues long: DNA/RNA-binding protein Alba (90 aa).

K11 carries the N6-acetyllysine modification.

It belongs to the histone-like Alba family. Post-translationally, acetylated. Acetylation at Lys-11 decreases DNA-binding affinity.

It is found in the cytoplasm. The protein resides in the chromosome. Functionally, binds double-stranded DNA tightly but without sequence specificity. Involved in DNA compaction. This chain is DNA/RNA-binding protein Alba, found in Picrophilus torridus (strain ATCC 700027 / DSM 9790 / JCM 10055 / NBRC 100828 / KAW 2/3).